A 364-amino-acid chain; its full sequence is Guanine nucleotide-binding protein alpha-6 subunit (364 aa).

Residues 1-29 are disordered; the sequence is MGAGATGLRGARLSPEERANSSKSRAIDR. Gly-2 is lipidated: N-myristoyl glycine. Positions 14 to 29 are enriched in basic and acidic residues; it reads SPEERANSSKSRAIDR. Positions 40 to 363 constitute a G-alpha domain; that stretch reads NRFKILLLGT…NENLRSAGLH (324 aa). The interval 43–56 is G1 motif; that stretch reads KILLLGTAESGKST. GTP is bound by residues 48-55, 186-192, 211-215, 280-283, and Ala-335; these read GTAESGKS, VHCRIST, DVGGQ, and NKYD. Positions 55 and 192 each coordinate Mg(2+). The segment at 184 to 192 is G2 motif; that stretch reads DIVHCRIST. The interval 207–216 is G3 motif; the sequence is FKMVDVGGQR. Residues 276-283 form a G4 motif region; the sequence is VLFLNKYD. The tract at residues 333-338 is G5 motif; it reads TTATDT.

This sequence belongs to the G-alpha family. In terms of assembly, g proteins are composed of 3 units; alpha, beta and gamma. The alpha chain contains the guanine nucleotide binding site.

In terms of biological role, guanine nucleotide-binding proteins (G proteins) are involved as modulators or transducers in various transmembrane signaling systems. The sequence is that of Guanine nucleotide-binding protein alpha-6 subunit (gpa-6) from Caenorhabditis elegans.